Here is a 466-residue protein sequence, read N- to C-terminus: MGKTLYEKVYDAHVAVAAEGENPILYIDRHLVHEVTSPQAFDGLREKGRKVRQVSKTFATMDHNVSTTTKDINASGEMARIQMETLSKNCEEFGVTLYDINHKYQGIVHVMGPELGITLPGMTIVCGDSHTATHGAFGSLAFGIGTSEVEHVLATQTLKQARAKTMKIEVKGKVAPGITAKDIVLAIIGETTAAGGTGYVVEFCGEAITDLSMEGRMTVCNMAIELGAKAGLIAPDETTFEYIKGRKFSPQGSDFDAAVEYWKTLKTDDEAQFDAVVTLNAADIKPQVTWGTNPGQVIAVDQPIPAPESFADPVEKASAEKALAYMGLEAGKSLSDYNVDKVFVGSCTNSRIEDMRAAAEIAKGRKVASHVQALIVPGSEQVKAQAEAEGLDVIFKEAGFEWRLPGCSMCLAMNNDRLGPHERCASTSNRNFEGRQGRDGRTHLVSPAMAAAAAIAGHFVDIRELD.

[4Fe-4S] cluster-binding residues include C347, C407, and C410.

It belongs to the aconitase/IPM isomerase family. LeuC type 1 subfamily. As to quaternary structure, heterodimer of LeuC and LeuD. The cofactor is [4Fe-4S] cluster.

It carries out the reaction (2R,3S)-3-isopropylmalate = (2S)-2-isopropylmalate. The protein operates within amino-acid biosynthesis; L-leucine biosynthesis; L-leucine from 3-methyl-2-oxobutanoate: step 2/4. Functionally, catalyzes the isomerization between 2-isopropylmalate and 3-isopropylmalate, via the formation of 2-isopropylmaleate. The chain is 3-isopropylmalate dehydratase large subunit from Vibrio campbellii (strain ATCC BAA-1116).